We begin with the raw amino-acid sequence, 354 residues long: Protein angel (354 aa).

Positions 22–59 (VSSQAKGASGKRKQKAKEMESSHDRNRRWTSLGNQAEG) are disordered.

This sequence belongs to the CCR4/nocturin family. Ubiquitously expressed in embryos.

This is Protein angel (angel) from Drosophila melanogaster (Fruit fly).